The sequence spans 165 residues: MLAVIRIRGRTGIKQDIEDTAHLLRLNRINHLVLLQEDAVTKGMLQKVKDYVTWGEIDVDTLEVLLKNRCLFKGRRKLTEEELKDVTGFGSYRDLAKALVDGKIKFSEINDVVPVIRLNPPYKGYEAIKTSYRNGGSAGYRGKDINNLIRRMIIPGVDLNGQREN.

The protein belongs to the universal ribosomal protein uL30 family. In terms of assembly, part of the 50S ribosomal subunit.

In Thermoplasma volcanium (strain ATCC 51530 / DSM 4299 / JCM 9571 / NBRC 15438 / GSS1), this protein is Large ribosomal subunit protein uL30.